We begin with the raw amino-acid sequence, 260 residues long: MVYTSLSSKDGNYPYQLNIAHLYGNLMNTYGDNGNILMLKYVAEKLGAHVTVDIVSLHDDFDENHYDIAFFGGGQDFEQSIIADDLPAKKESIDNYIQNDGVVLAICGGFQLLGQYYVEASGKRIEGLGVMGHYTLNQTNNRFIGDIKIHNEDFDETYYGFENHQGRTFLSDDQKPLGQVVYGNGNNEEKVGEGVHYKNVFGSYFHGPILSRNANLAYRLVTTALKKKYGQDIQLPAYEDILSQEIAEEYSDVKSKADFS.

In terms of domain architecture, GATase cobBQ-type spans 16–214; the sequence is QLNIAHLYGN…FHGPILSRNA (199 aa). Cys107 functions as the Nucleophile in the catalytic mechanism. A substrate-binding site is contributed by Arg142. His206 is an active-site residue.

This sequence belongs to the CobB/CobQ family. GatD subfamily. As to quaternary structure, forms a heterodimer with MurT.

It carries out the reaction beta-D-GlcNAc-(1-&gt;4)-Mur2Ac(oyl-L-Ala-gamma-D-Glu-L-Lys-D-Ala-D-Ala)-di-trans,octa-cis-undecaprenyl diphosphate + L-glutamine + ATP + H2O = beta-D-GlcNAc-(1-&gt;4)-Mur2Ac(oyl-L-Ala-D-isoglutaminyl-L-Lys-D-Ala-D-Ala)-di-trans,octa-cis-undecaprenyl diphosphate + L-glutamate + ADP + phosphate + H(+). The enzyme catalyses L-glutamine + H2O = L-glutamate + NH4(+). It functions in the pathway cell wall biogenesis; peptidoglycan biosynthesis. Its function is as follows. The lipid II isoglutaminyl synthase complex catalyzes the formation of alpha-D-isoglutamine in the cell wall lipid II stem peptide. The GatD subunit catalyzes the hydrolysis of glutamine to glutamate and ammonia. The resulting ammonia molecule is channeled to the active site of MurT. In Streptococcus pneumoniae (strain ATCC BAA-255 / R6), this protein is Lipid II isoglutaminyl synthase (glutamine-hydrolyzing) subunit GatD.